Reading from the N-terminus, the 469-residue chain is MSAPRTLYDKIFDDHLVDRQDDGTCLLYIDRHLVHEVTSPQAFEGLRMAGRKVHAPTRTLAVVDHNVPTTPDRAEGIKNEESRIQVEALAKNAADFGVEYYSEKDKRQGIVHIVGPEQGFTLPGMTIVCGDSHTSTHGAFGALAHGIGTSEVEHVLATQTLIQKKAKNMLVRVDGKLPAGVTAKDIILAIIGEIGTAGGTGHVIEFAGEAIEALSMEGRMTVCNMTIEGGARAGLIAPDEKTFEYIKGKPRAPKGEELEMALQYWKTLHTDEGAHFDRTVVLDAANLPPIVSWGSSPEDVISVQGVVPNPDDIADENKRTSKWRALDYMGLKPGTKITDITIDRVFIGSCTNGRIEDLRAAAAVLKDRKVASTVSAMVVPGSGLVKEQAEAEGLDKIFLDAGCEWREPGCSMCLAMNDDRLKPEERCASTSNRNFEGRQGYKGRTHLVSPAMAAAAAIAGHFVDIREWK.

3 residues coordinate [4Fe-4S] cluster: Cys-350, Cys-410, and Cys-413.

The protein belongs to the aconitase/IPM isomerase family. LeuC type 1 subfamily. As to quaternary structure, heterodimer of LeuC and LeuD. Requires [4Fe-4S] cluster as cofactor.

It carries out the reaction (2R,3S)-3-isopropylmalate = (2S)-2-isopropylmalate. Its pathway is amino-acid biosynthesis; L-leucine biosynthesis; L-leucine from 3-methyl-2-oxobutanoate: step 2/4. Catalyzes the isomerization between 2-isopropylmalate and 3-isopropylmalate, via the formation of 2-isopropylmaleate. In Allorhizobium ampelinum (strain ATCC BAA-846 / DSM 112012 / S4) (Agrobacterium vitis (strain S4)), this protein is 3-isopropylmalate dehydratase large subunit.